Reading from the N-terminus, the 195-residue chain is Probable GTP-binding protein EngB (195 aa).

The EngB-type G domain maps to 22–194; sequence LKGEVAFVGR…LDLISTLLKE (173 aa). GTP-binding positions include 30–37, 56–60, 74–77, 141–144, and 173–175; these read GRSNVGKS, GKTRS, DLPG, TKMD, and TSS. Mg(2+)-binding residues include Ser-37 and Thr-58.

Belongs to the TRAFAC class TrmE-Era-EngA-EngB-Septin-like GTPase superfamily. EngB GTPase family. Mg(2+) is required as a cofactor.

Its function is as follows. Necessary for normal cell division and for the maintenance of normal septation. The chain is Probable GTP-binding protein EngB from Thermotoga petrophila (strain ATCC BAA-488 / DSM 13995 / JCM 10881 / RKU-1).